The sequence spans 380 residues: MFVRHLTLTDFRSWARADLELEPGRTVFVGPNGFGKTNLVEALWYSATLGSHRVASDAPLIRVGAPRAVVSTIVVNEGRELAVDLEITTGRANKARLNRSPVRSPREVLGVLRAVLFAPEDLALVRGDPGERRRYLDELATTRRPSIAGVRADYDRVIRQRTALLKSAAGARYRGDRSVLETLDVWDGHLAAHGALLMAARADLVHHLAPEVEKAYQLLAPGSRPAAIRYRTSIDAEDDVSAEYYEAALLDAMTRRRDAELERGVCLVGPHRDDLELRLGDQMAKGYASHGESWSMALSLRLAAYELLRTDGSDPVLLLDDVFAELDAARRRALAEVAASAEQVLVTAAVAEDIPADWDARRIMIRMQDDDDGRVSMVES.

30–37 (GPNGFGKT) provides a ligand contact to ATP.

Belongs to the RecF family.

The protein localises to the cytoplasm. Functionally, the RecF protein is involved in DNA metabolism; it is required for DNA replication and normal SOS inducibility. RecF binds preferentially to single-stranded, linear DNA. It also seems to bind ATP. This Mycobacterium sp. (strain KMS) protein is DNA replication and repair protein RecF.